The sequence spans 337 residues: Tetraacyldisaccharide 4'-kinase (337 aa).

Position 52 to 59 (52 to 59 (TLGGAGKT)) interacts with ATP.

This sequence belongs to the LpxK family.

The catalysed reaction is a lipid A disaccharide + ATP = a lipid IVA + ADP + H(+). It participates in glycolipid biosynthesis; lipid IV(A) biosynthesis; lipid IV(A) from (3R)-3-hydroxytetradecanoyl-[acyl-carrier-protein] and UDP-N-acetyl-alpha-D-glucosamine: step 6/6. Its function is as follows. Transfers the gamma-phosphate of ATP to the 4'-position of a tetraacyldisaccharide 1-phosphate intermediate (termed DS-1-P) to form tetraacyldisaccharide 1,4'-bis-phosphate (lipid IVA). This chain is Tetraacyldisaccharide 4'-kinase, found in Methylobacterium nodulans (strain LMG 21967 / CNCM I-2342 / ORS 2060).